The primary structure comprises 395 residues: RNA demethylase ALKBH5 (395 aa).

2 disordered regions span residues 1–28 and 47–83; these read MAAA…AGSR and AAEP…EEEA. At Ala2 the chain carries N-acetylalanine. Residue Lys58 forms a Glycyl lysine isopeptide (Lys-Gly) (interchain with G-Cter in ubiquitin) linkage. Basic and acidic residues predominate over residues 60–83; sequence KYQEDSDPERSDYEEHQLQKEEEA. Ser65 and Ser70 each carry phosphoserine. A coiled-coil region spans residues 68–117; that stretch reads ERSDYEEHQLQKEEEARKVKSGIRQIRLFSQDECSKIEARIDEVVSRAEK. Phosphotyrosine is present on Tyr72. Residue Lys87 forms a Glycyl lysine isopeptide (Lys-Gly) (interchain with G-Cter in SUMO1) linkage. At Ser88 the chain carries Phosphoserine. Lys133 carries the post-translational modification N6-acetyllysine. Tyr140 is an active-site residue. Asn194, Tyr196, and His205 together coordinate 2-oxoglutarate. The cysteines at positions 231 and 268 are disulfide-linked. N6-acetyllysine is present on Lys236. 2-oxoglutarate is bound by residues His267 and Arg278. The segment at 294-395 is disordered; that stretch reads ETKSLSSSTL…PTRKVKMRRH (102 aa). Positions 296-306 are enriched in low complexity; that stretch reads KSLSSSTLPPS. A Glycyl lysine isopeptide (Lys-Gly) (interchain with G-Cter in SUMO1) cross-link involves residue Lys322. Ser326 bears the Phosphoserine mark. Lys329 participates in a covalent cross-link: Glycyl lysine isopeptide (Lys-Gly) (interchain with G-Cter in SUMO2). A compositionally biased stretch (basic and acidic residues) spans 329–350; it reads KADPDAAHRPRILEMDKEENRR. Arg360 bears the Omega-N-methylarginine mark. Ser362, Ser372, Ser375, and Ser385 each carry phosphoserine.

It belongs to the alkB family. In terms of assembly, monomer. Interacts with RBM33; promoting desumoylation by SENP1 and recruitment to N(6)-methyladenosine-containing mRNAs. Interacts (when acetylated by KAT8) with PSPC1; interaction facilitates recognition of N(6)-methyladenosine (m6A) mRNA. It depends on Fe(2+) as a cofactor. In terms of processing, phosphorylated at Ser-88 and Ser-326 in response to reactive oxygen species (ROS), promoting sumoylation and inactivation. Post-translationally, acetylated by KAT8 at Lys-236, promoting interaction with PSPC1, thereby facilitating recognition of N(6)-methyladenosine (m6A) mRNA by ALKBH5. Deacetylated at Lys-236 by HDAC7. Sumoylated at Lys-87 and Lys-322 by PIAS4 following phosphorylation at Ser-88 and Ser-326 in response to reactive oxygen species (ROS), inhibiting the RNA demethylase activity. Desumoylated by SENP1; relieving RNA demethylase inhibition, leading to N(6)-methyladenosine-containing mRNAs demethylation. In terms of processing, ubiquitinated at Lys-58 via 'Lys-48'-linked polyubiquitin chain, leading to its degradation by the proteasome. Deubiquitinated at Lys-58 by USP9X, promoting its stabilizazion. As to expression, widely expressed, with highest expression in testis. In testis, present in almost all testicular cell types except elongating and elongated spermatids (at protein level). Among spermatogenic cells, present at high level in spermatocytes; medium levels in spermatogonia and lower levels in round spermatids (at protein level).

Its subcellular location is the nucleus speckle. It carries out the reaction an N(6)-methyladenosine in mRNA + 2-oxoglutarate + O2 = an adenosine in mRNA + formaldehyde + succinate + CO2. With respect to regulation, RNA demethylase activity is inhibited following sumoylation. Inhibition is relieved following desumoylation. Inhibited by histone demethylase inhibitor IOX1. Functionally, dioxygenase that specifically demethylates N(6)-methyladenosine (m6A) RNA, the most prevalent internal modification of messenger RNA (mRNA) in higher eukaryotes. Demethylates RNA by oxidative demethylation, which requires molecular oxygen, alpha-ketoglutarate and iron. Demethylation of m6A mRNA affects mRNA processing, translation and export. Can also demethylate N(6)-methyladenosine in single-stranded DNA (in vitro). Required for the late meiotic and haploid phases of spermatogenesis by mediating m6A demethylation in spermatocytes and round spermatids: m6A demethylation of target transcripts is required for correct splicing and the production of longer 3'-UTR mRNAs in male germ cells. Involved in paraspeckle assembly, a nuclear membraneless organelle, by undergoing liquid-liquid phase separation. Paraspeckle assembly is coupled with m6A demethylation of RNAs, such as NEAT1 non-coding RNA. Also acts as a negative regulator of T-cell development: inhibits gamma-delta T-cell proliferation via demethylation of JAG1 and NOTCH2 transcripts. Inhibits regulatory T-cell (Treg) recruitment by mediating demethylation and destabilization of CCL28 mRNAs. The protein is RNA demethylase ALKBH5 of Mus musculus (Mouse).